A 409-amino-acid polypeptide reads, in one-letter code: Odorant receptor 35a (409 aa).

At Met-1–Ser-35 the chain is on the cytoplasmic side. The chain crosses the membrane as a helical span at residues Thr-36 to Met-56. Residues Gln-57–Arg-64 lie on the Extracellular side of the membrane. Residues Tyr-65–Tyr-85 form a helical membrane-spanning segment. Residues Leu-86–Leu-139 are Cytoplasmic-facing. The chain crosses the membrane as a helical span at residues Val-140–Ile-160. Residue Asn-161 is glycosylated (N-linked (GlcNAc...) asparagine). At Asn-161–Asp-177 the chain is on the extracellular side. A helical membrane pass occupies residues Pro-178–Thr-198. Over Met-199 to Arg-273 the chain is Cytoplasmic. The chain crosses the membrane as a helical span at residues Val-274–Thr-294. The Extracellular segment spans residues Asn-295–Tyr-302. A helical membrane pass occupies residues Ala-303–Leu-323. The Cytoplasmic segment spans residues Ala-324 to Arg-379. Residues Val-380–Thr-400 form a helical membrane-spanning segment. Over Ser-401 to Asn-409 the chain is Extracellular.

This sequence belongs to the insect chemoreceptor superfamily. Heteromeric odorant receptor channel (TC 1.A.69) family. Or1a subfamily. In terms of assembly, interacts with Orco. Complexes exist early in the endomembrane system in olfactory sensory neurons (OSNs), coupling these complexes to the conserved ciliary trafficking pathway. In terms of tissue distribution, expressed in ac3B olfactory sensory neurons in the antenna.

It is found in the cell membrane. Functionally, odorant receptor which mediates acceptance or avoidance behavior, depending on its substrates. The odorant receptor repertoire encodes a large collection of odor stimuli that vary widely in identity, intensity, and duration. Forms a complex with Orco to form odorant-sensing units, providing sensitive and prolonged odorant signaling and calcium permeability. Involved in the behavioral responses to esters. Involved in the behavioral responses to butanol, pentanol, hexanol, octanol, propyl acetate, and butyl acetate. The chain is Odorant receptor 35a (Or35a) from Drosophila melanogaster (Fruit fly).